The chain runs to 100 residues: MVPTSYYILLSALLFTLGVVGVITRRNALVLFMSVELMLNSANLALVTFAMARQDVAGQIVVFFVIVVAAAEVAVGLALLVAIFRTKHTTDVDEINALRG.

3 helical membrane-spanning segments follow: residues 3-23, 29-49, and 60-80; these read PTSYYILLSALLFTLGVVGVI, LVLFMSVELMLNSANLALVTF, and IVVFFVIVVAAAEVAVGLALL.

This sequence belongs to the complex I subunit 4L family. As to quaternary structure, NDH-1 is composed of 14 different subunits. Subunits NuoA, H, J, K, L, M, N constitute the membrane sector of the complex.

It localises to the cell membrane. It catalyses the reaction a quinone + NADH + 5 H(+)(in) = a quinol + NAD(+) + 4 H(+)(out). Functionally, NDH-1 shuttles electrons from NADH, via FMN and iron-sulfur (Fe-S) centers, to quinones in the respiratory chain. The immediate electron acceptor for the enzyme in this species is believed to be ubiquinone. Couples the redox reaction to proton translocation (for every two electrons transferred, four hydrogen ions are translocated across the cytoplasmic membrane), and thus conserves the redox energy in a proton gradient. The sequence is that of NADH-quinone oxidoreductase subunit K from Roseiflexus castenholzii (strain DSM 13941 / HLO8).